The sequence spans 1338 residues: Terpene cyclase-glycosyl transferase fusion protein fsoA (1338 aa).

Residues 1-687 (MDMAPDELDE…RFLDRTDEPD (687 aa)) form a terpenne cyclase region. PFTB repeat units follow at residues 19 to 61 (LEQA…PALN), 69 to 111 (AAAL…RLLG), and 267 to 307 (LRRC…SLEH). D412 (proton donor) is an active-site residue. PFTB repeat units lie at residues 434–475 (VEMG…DSLV), 515–556 (AQKA…AFCG), and 564–615 (ALRA…LRFR). The segment at 688–1338 (QDRDLPLLMT…NMLLGEGCQG (651 aa)) is glycosyltransferase.

The protein in the N-terminal section; belongs to the terpene cyclase/mutase family. It in the C-terminal section; belongs to the glycosyltransferase 28 family.

The catalysed reaction is (S)-2,3-epoxysqualene = isomotiol. It catalyses the reaction isomotiol + UDP-alpha-D-glucose = 3-O-(beta-D-glucopyranosyl)-isomotiol + UDP + H(+). The enzyme catalyses 2alpha-hydroxyisomotiol + UDP-alpha-D-glucose = 3-O-(beta-D-glucopyranosyl)-2alpha-hydroxyisomotiol + UDP + H(+). Its pathway is secondary metabolite biosynthesis; terpenoid biosynthesis. In terms of biological role, terpene cyclase-glycosyl transferase fusion protein; part of the gene cluster that mediates the biosynthesis of the enfumafungin-type antibiotic, fuscoatroside. Within the pathway, fsoA plays two important roles, the cyclization of 2,3(S)-oxidosqualene into isomotiol via its terpene cyclase (TC) domain and the C3 glycosylation of several intermediates via its glycosyltransferase (GT) domain. The fuscoatroside biosynthesis is initiated by the cyclization of 2,3(S)-oxidosqualene through FsoA's TC domain, leading to the formation of the fernane skeleton isomotiol, harboring a fernane triterpene skeleton with a C8-C9 double bond. Subsequently, C2-alpha-hydroxylation mediated by fsoD results in the production of 2-alpha-hydroxy-isomotiol, which is further acetylated by fsoF. The GT domain of FsoA may convert isomotiol, 2-alpha-hydroxy-isomotiol, and the acetylated derivative of 2-alpha-hydroxy-isomotiol into their corresponding glycosides 3-O-(beta-D-glucopyranosyl)-isomotiol, 3-O-(beta-D-glucopyranosyl)-2-alpha-hydroxy-isomotiol, and 3-O-(beta-D-glucopyranosyl)-2-alpha-acetoxy-isomotiol, which then undergo oxidative cleavage under the action of fsoE to form s 2-deacetoxy-fuscoatroside, 2-deacetyl-fuscoatroside, and fuscoatroside, respectively. Although hydroxylation followed by acetylation of 3-O-(beta-D-glucopyranosyl)-isomotiol and 2-deacetoxy-fuscoatroside by fsoD and fsoF could not be ruled out, this process is likely to occur with difficulty due to bulky steric hindrance caused by the presence of a glycan at C3 in these compounds. Interestingly, fsoE can also utilize the aglycones isomotiol and 2-alpha-hydroxy-isomotiol as substrates to generate 19-beta-hydroxy-isomotiol and 2-alpha,19-beta-dihydroxy-isomotiol, respectively. These reactions occur with lower efficiency. Finally, fsoE can further convert 2-alpha,19-beta-dihydroxy-isomotiol into 2-alpha-hydroxy-ismotiol-19-one and 2-alpha-hydroxy-ismotiol-19-one into 2-deacetyl-3-deglucopyranosyl-fuscoatroside. In Humicola fuscoatra, this protein is Terpene cyclase-glycosyl transferase fusion protein fsoA.